The following is a 534-amino-acid chain: Pentatricopeptide repeat-containing protein At5g59600 (534 aa).

12 PPR repeats span residues Leu50–Arg80, Asp81–Leu115, Asp116–Ser150, Asp151–Gln181, Asp182–Pro216, Asp217–Pro251, Asp252–Pro286, Asn287–Asp321, His322–Lys352, Thr353–Leu387, Asp388–Lys418, and Arg424–Glu454. Positions Val459 to Val534 are type E motif.

Belongs to the PPR family. PCMP-E subfamily.

This Arabidopsis thaliana (Mouse-ear cress) protein is Pentatricopeptide repeat-containing protein At5g59600 (PCMP-E1).